A 314-amino-acid polypeptide reads, in one-letter code: Probable carboxylesterase 2 (314 aa).

The short motif at 79-81 (HGG) is the Involved in the stabilization of the negatively charged intermediate by the formation of the oxyanion hole element. Catalysis depends on residues S158, D254, and H286.

This sequence belongs to the 'GDXG' lipolytic enzyme family. Expressed in roots and flowers.

It carries out the reaction a carboxylic ester + H2O = an alcohol + a carboxylate + H(+). Carboxylesterase acting on esters with varying acyl chain length. The sequence is that of Probable carboxylesterase 2 (CXE2) from Arabidopsis thaliana (Mouse-ear cress).